Consider the following 299-residue polypeptide: N-acetylmuramic acid 6-phosphate etherase (299 aa).

Residues 55-218 enclose the SIS domain; it reads CINCLEKNGR…STTVMVKMGK (164 aa). The Proton donor role is filled by Glu-83. Glu-114 is an active-site residue.

Belongs to the GCKR-like family. MurNAc-6-P etherase subfamily. As to quaternary structure, homodimer.

The catalysed reaction is N-acetyl-D-muramate 6-phosphate + H2O = N-acetyl-D-glucosamine 6-phosphate + (R)-lactate. It participates in amino-sugar metabolism; N-acetylmuramate degradation. Its function is as follows. Specifically catalyzes the cleavage of the D-lactyl ether substituent of MurNAc 6-phosphate, producing GlcNAc 6-phosphate and D-lactate. In Pseudothermotoga lettingae (strain ATCC BAA-301 / DSM 14385 / NBRC 107922 / TMO) (Thermotoga lettingae), this protein is N-acetylmuramic acid 6-phosphate etherase.